A 141-amino-acid chain; its full sequence is Endoribonuclease YbeY (141 aa).

Residues His105, His109, and Asp115 each coordinate Zn(2+).

The protein belongs to the endoribonuclease YbeY family. It depends on Zn(2+) as a cofactor.

The protein resides in the cytoplasm. In terms of biological role, single strand-specific metallo-endoribonuclease involved in late-stage 70S ribosome quality control and in maturation of the 3' terminus of the 16S rRNA. The polypeptide is Endoribonuclease YbeY (Chlorobaculum parvum (strain DSM 263 / NCIMB 8327) (Chlorobium vibrioforme subsp. thiosulfatophilum)).